The sequence spans 1120 residues: Isoleucine--tRNA ligase (1120 aa).

Positions 64 to 74 (PFANGLPHYGH) match the 'HIGH' region motif. Positions 647 to 651 (KLSKR) match the 'KMSKS' region motif. An ATP-binding site is contributed by Lys-650.

It belongs to the class-I aminoacyl-tRNA synthetase family. IleS type 2 subfamily. As to quaternary structure, monomer. Zn(2+) serves as cofactor.

The protein resides in the cytoplasm. It catalyses the reaction tRNA(Ile) + L-isoleucine + ATP = L-isoleucyl-tRNA(Ile) + AMP + diphosphate. Catalyzes the attachment of isoleucine to tRNA(Ile). As IleRS can inadvertently accommodate and process structurally similar amino acids such as valine, to avoid such errors it has two additional distinct tRNA(Ile)-dependent editing activities. One activity is designated as 'pretransfer' editing and involves the hydrolysis of activated Val-AMP. The other activity is designated 'posttransfer' editing and involves deacylation of mischarged Val-tRNA(Ile). This is Isoleucine--tRNA ligase from Ehrlichia canis (strain Jake).